A 280-amino-acid chain; its full sequence is Clathrin adapter accessory protein LAA2 (280 aa).

Positions Met1 to Asn26 are disordered. The Ear-binding motif motif lies at Asp19–Ala30.

Interacts with the clathrin-associated adapter complex AP-1. Interacts with LAA1.

Its subcellular location is the cytoplasmic vesicle. It localises to the clathrin-coated vesicle. Involved in localization of clathrin-associated adapter complex (AP-1) and subsequent AP-1-mediated clathrin-coated vesicle cargo loading. Directly mediates the interaction between LAA1 and AP-1 which is required for AP-1 localization. In complex with LAA1, cooperates with the small GTPase ARF1 and the phosphatidyl-inositol-4-phosphate (PI4P) synthesis to confer temporal specificity to AP-1 recruitment. This Saccharomyces cerevisiae (strain ATCC 204508 / S288c) (Baker's yeast) protein is Clathrin adapter accessory protein LAA2.